We begin with the raw amino-acid sequence, 504 residues long: ATP synthase subunit beta (504 aa).

181–188 (GGAGVGKT) is a binding site for ATP.

The protein belongs to the ATPase alpha/beta chains family. F-type ATPases have 2 components, CF(1) - the catalytic core - and CF(0) - the membrane proton channel. CF(1) has five subunits: alpha(3), beta(3), gamma(1), delta(1), epsilon(1). CF(0) has three main subunits: a(1), b(2) and c(9-12). The alpha and beta chains form an alternating ring which encloses part of the gamma chain. CF(1) is attached to CF(0) by a central stalk formed by the gamma and epsilon chains, while a peripheral stalk is formed by the delta and b chains.

It is found in the cell inner membrane. The enzyme catalyses ATP + H2O + 4 H(+)(in) = ADP + phosphate + 5 H(+)(out). Its function is as follows. Produces ATP from ADP in the presence of a proton gradient across the membrane. The catalytic sites are hosted primarily by the beta subunits. In Ehrlichia ruminantium (strain Gardel), this protein is ATP synthase subunit beta.